The primary structure comprises 211 residues: uncharacterized protein (211 aa).

The segment at Met1–Pro43 is disordered.

This is an uncharacterized protein from Homo sapiens (Human).